The sequence spans 279 residues: Small ribosomal subunit protein uS2 (279 aa).

Composition is skewed to acidic residues over residues 1–18, 28–42, and 65–81; these read MTENDNEVVEVVDDDEAV, TATEAEADTETDESN, and ADAEPDDELEGPTFDED. The tract at residues 1–81 is disordered; sequence MTENDNEVVE…ELEGPTFDED (81 aa).

This sequence belongs to the universal ribosomal protein uS2 family.

This is Small ribosomal subunit protein uS2 from Haloquadratum walsbyi (strain DSM 16790 / HBSQ001).